The sequence spans 630 residues: FAST kinase domain-containing protein 4 (630 aa).

An RAP domain is found at 560-618 (IAFLRWEFPNFNSRSKDLLGRFVLARRHVLAAGFLVVDVPYYEWLDLKSEWQKSAYLKD).

The protein belongs to the FAST kinase family. Expression detected in spleen, testis, colon, heart, smooth muscle, kidney, brain, lung, liver, brown and white adipose tissue with highest expression in testis, heart, smooth muscle and brown adipose tissue.

The protein localises to the mitochondrion matrix. In terms of biological role, plays a role in processing of mitochondrial RNA precursors and in stabilization of a subset of mature mitochondrial RNA species, such as MT-CO1, MT-CO2, MT-CYB, MT-CO3, MT-ND3, MT-ND5 and MT-ATP8/6. May play a role in cell cycle progression. This chain is FAST kinase domain-containing protein 4 (Tbrg4), found in Mus musculus (Mouse).